The sequence spans 295 residues: Zinc finger C2H2 protein ECU08_0560 (295 aa).

C2H2-type zinc fingers lie at residues 219–243 (FVCT…NLMH) and 249–273 (HKCR…YKVH).

This Encephalitozoon cuniculi (strain GB-M1) (Microsporidian parasite) protein is Zinc finger C2H2 protein ECU08_0560.